A 188-amino-acid polypeptide reads, in one-letter code: Elongation factor P (188 aa).

This sequence belongs to the elongation factor P family.

It is found in the cytoplasm. It participates in protein biosynthesis; polypeptide chain elongation. Functionally, involved in peptide bond synthesis. Stimulates efficient translation and peptide-bond synthesis on native or reconstituted 70S ribosomes in vitro. Probably functions indirectly by altering the affinity of the ribosome for aminoacyl-tRNA, thus increasing their reactivity as acceptors for peptidyl transferase. The chain is Elongation factor P from Gluconacetobacter diazotrophicus (strain ATCC 49037 / DSM 5601 / CCUG 37298 / CIP 103539 / LMG 7603 / PAl5).